The sequence spans 220 residues: Vesicle-associated protein 2-1 (220 aa).

M1 carries the N-acetylmethionine modification. The Cytoplasmic portion of the chain corresponds to 1-196 (MTGVGENQLI…RNSGNGLSLK (196 aa)). T2 carries the N-acetylthreonine; in Vesicle-associated protein 2-1, N-terminally processed modification. Residues 9-129 (LISIQPDELK…TECKLKVSYI (121 aa)) enclose the MSP domain. Residues 133-154 (TTQRSSESGATNGDGQSSETIS) are disordered. A coiled-coil region spans residues 153-188 (ISTIQRLKEERDAAVKQTQQLQHELETVRRRRNQRN). Residues 197–217 (LAAMVGLIGLIIGFILKLTLA) traverse the membrane as a helical; Anchor for type IV membrane protein segment.

The protein belongs to the VAMP-associated protein (VAP) (TC 9.B.17) family.

Its subcellular location is the endoplasmic reticulum membrane. May play a role in vesicle trafficking. The sequence is that of Vesicle-associated protein 2-1 (PVA21) from Arabidopsis thaliana (Mouse-ear cress).